Reading from the N-terminus, the 234-residue chain is ATP-dependent dethiobiotin synthetase BioD (234 aa).

Residue 12 to 17 (DVGKTI) coordinates ATP. Mg(2+) is bound at residue threonine 16. The active site involves lysine 37. Position 41 (threonine 41) interacts with substrate. ATP contacts are provided by residues aspartate 54 and 115 to 118 (EGAG). Residues aspartate 54 and glutamate 115 each coordinate Mg(2+).

This sequence belongs to the dethiobiotin synthetase family. As to quaternary structure, homodimer. The cofactor is Mg(2+).

Its subcellular location is the cytoplasm. It catalyses the reaction (7R,8S)-7,8-diammoniononanoate + CO2 + ATP = (4R,5S)-dethiobiotin + ADP + phosphate + 3 H(+). It functions in the pathway cofactor biosynthesis; biotin biosynthesis; biotin from 7,8-diaminononanoate: step 1/2. Functionally, catalyzes a mechanistically unusual reaction, the ATP-dependent insertion of CO2 between the N7 and N8 nitrogen atoms of 7,8-diaminopelargonic acid (DAPA, also called 7,8-diammoniononanoate) to form a ureido ring. The polypeptide is ATP-dependent dethiobiotin synthetase BioD (Lysinibacillus sphaericus (strain C3-41)).